A 101-amino-acid polypeptide reads, in one-letter code: Aspartyl/glutamyl-tRNA(Asn/Gln) amidotransferase subunit C (101 aa).

It belongs to the GatC family. Heterotrimer of A, B and C subunits.

The enzyme catalyses L-glutamyl-tRNA(Gln) + L-glutamine + ATP + H2O = L-glutaminyl-tRNA(Gln) + L-glutamate + ADP + phosphate + H(+). The catalysed reaction is L-aspartyl-tRNA(Asn) + L-glutamine + ATP + H2O = L-asparaginyl-tRNA(Asn) + L-glutamate + ADP + phosphate + 2 H(+). Functionally, allows the formation of correctly charged Asn-tRNA(Asn) or Gln-tRNA(Gln) through the transamidation of misacylated Asp-tRNA(Asn) or Glu-tRNA(Gln) in organisms which lack either or both of asparaginyl-tRNA or glutaminyl-tRNA synthetases. The reaction takes place in the presence of glutamine and ATP through an activated phospho-Asp-tRNA(Asn) or phospho-Glu-tRNA(Gln). The protein is Aspartyl/glutamyl-tRNA(Asn/Gln) amidotransferase subunit C of Lactococcus lactis subsp. cremoris (strain SK11).